A 138-amino-acid polypeptide reads, in one-letter code: Transcription antitermination protein NusB (138 aa).

It belongs to the NusB family.

Its function is as follows. Involved in transcription antitermination. Required for transcription of ribosomal RNA (rRNA) genes. Binds specifically to the boxA antiterminator sequence of the ribosomal RNA (rrn) operons. The polypeptide is Transcription antitermination protein NusB (Geobacter sulfurreducens (strain ATCC 51573 / DSM 12127 / PCA)).